The chain runs to 261 residues: Pimeloyl-[acyl-carrier protein] methyl ester esterase (261 aa).

Positions 16-241 (LVLIHGWGMN…QASHAPFISH (226 aa)) constitute an AB hydrolase-1 domain. Substrate is bound by residues tryptophan 22, 82–83 (SL), and 143–147 (FMTLQ). The active-site Nucleophile is serine 82. Active-site residues include aspartate 207 and histidine 235. Position 235 (histidine 235) interacts with substrate.

The protein belongs to the AB hydrolase superfamily. Carboxylesterase BioH family. As to quaternary structure, monomer.

It is found in the cytoplasm. It catalyses the reaction 6-carboxyhexanoyl-[ACP] methyl ester + H2O = 6-carboxyhexanoyl-[ACP] + methanol + H(+). Its pathway is cofactor biosynthesis; biotin biosynthesis. The physiological role of BioH is to remove the methyl group introduced by BioC when the pimeloyl moiety is complete. It allows to synthesize pimeloyl-ACP via the fatty acid synthetic pathway through the hydrolysis of the ester bonds of pimeloyl-ACP esters. The polypeptide is Pimeloyl-[acyl-carrier protein] methyl ester esterase (Aliivibrio salmonicida (strain LFI1238) (Vibrio salmonicida (strain LFI1238))).